Reading from the N-terminus, the 248-residue chain is UPF0273 protein APE_1505.1 (248 aa).

The 245-residue stretch at 3-247 (DRVKTGIPGM…VVRIGRRVSI (245 aa)) folds into the KaiC domain. ATP is bound at residue 30–37 (GGPGTGKS).

It belongs to the UPF0273 family.

The sequence is that of UPF0273 protein APE_1505.1 from Aeropyrum pernix (strain ATCC 700893 / DSM 11879 / JCM 9820 / NBRC 100138 / K1).